Reading from the N-terminus, the 303-residue chain is Bidirectional sugar transporter SWEET14 (303 aa).

At 1–9 the chain is on the extracellular side; that stretch reads MAGMSLQHP. Residues 10–30 form a helical membrane-spanning segment; that stretch reads WAFAFGLLGNIISFMTYLAPL. The region spanning 13–98 is the MtN3/slv 1 domain; it reads AFGLLGNIIS…AVYLVYAPKK (86 aa). The Cytoplasmic segment spans residues 31–44; it reads PTFYRIYKSKSTQG. A helical membrane pass occupies residues 45-65; the sequence is FQSVPYVVALFSAMLWIYYAL. The Extracellular segment spans residues 66–72; sequence LKSDECL. Residues 73-93 form a helical membrane-spanning segment; that stretch reads LITINSAGCVIETIYIAVYLV. At 94–105 the chain is on the cytoplasmic side; that stretch reads YAPKKAKMFTAK. A helical transmembrane segment spans residues 106 to 126; it reads LLLLVNVGVFGLILLLTLLLS. Residues 127–133 lie on the Extracellular side of the membrane; it reads AGDRRIV. The chain crosses the membrane as a helical span at residues 134–154; that stretch reads VLGWVCVGFSVSVFVAPLSII. In terms of domain architecture, MtN3/slv 2 spans 134-217; it reads VLGWVCVGFS…MGLYAMYRNS (84 aa). The Cytoplasmic segment spans residues 155 to 167; the sequence is RLVVRTKSVEFMP. The chain crosses the membrane as a helical span at residues 168–188; it reads FSLSFSLTISAVVWFLYGLLI. Residues 189–192 lie on the Extracellular side of the membrane; it reads KDKY. A helical membrane pass occupies residues 193 to 213; sequence VALPNVLGFSFGVIQMGLYAM. Over 214–303 the chain is Cytoplasmic; sequence YRNSTPKAVL…AGAGEKKVAA (90 aa). Residues 266-290 are disordered; it reads HPVDVESPPAEAPPQEDDKAAAATA.

Belongs to the SWEET sugar transporter family. In terms of assembly, forms homooligomers and/or heterooligomers.

Its subcellular location is the cell membrane. Mediates both low-affinity uptake and efflux of sugar across the plasma membrane. This chain is Bidirectional sugar transporter SWEET14 (SWEET14), found in Oryza sativa subsp. indica (Rice).